The chain runs to 410 residues: MLSPVEVDLEAYDISRVSGFLPDKCPLRKLPDPYYVPWERLTAHLEPLIRAKRLQHELDQMPVLGITRLTSQPMRRRAYVLLSFLAQAYLWGEDIPNTTLPQAIAKPLTEVSTLLEIKPFATFAAFCLWSFSVHFDDDIGGDCHKFLDNMSMTCSFTGTTDEAWFFNVSTAIEARGGRIIPSILNAISAVQNNDMLTVEGFLLDFTICLRDLCDLIDRMHENCRPSVFYHRIRPFLSGTSNNNPATENSKGVFYVQAEDGTGEWHRYSGGSNAQSSLIQLFDITLGINHDIGYKTRYLREMRSYMPAQHRRFLARMEEISNLRPYALSHGPGSSNMCSLYNSAVLGLKNLRDKHMALVFRYIIIPRAKEKAGNGLAIRQKDLVGTGGTDMIPFLRETRDDTMNAVHLPYS.

His309 lines the heme pocket.

Belongs to the indoleamine 2,3-dioxygenase family. Heme is required as a cofactor.

The enzyme catalyses D-tryptophan + O2 = N-formyl-D-kynurenine. It catalyses the reaction L-tryptophan + O2 = N-formyl-L-kynurenine. The protein operates within secondary metabolite biosynthesis. Functionally, indoleamine 2,3-dioxygenase; part of the gene cluster that mediates the biosynthesis of the benzazepine alkaloid nanangelenin A which contains an unprecedented 3,4-dihydro-1-benzazepine-2,5-dione-N-prenyl-N-acetoxy-anthranilamide scaffold. The first step of nanangelenin biosynthesis is catalyzed by the indoleamine 2,3-dioxygenase nanC which produces N-formyl-kynurenine through the catabolism of tryptophan. The two-module NRPS nanA then utilizes anthranilate (Ant) and L-kynurenine (L-Kyn) to assemble the dipeptide product nanangelenin B. The first adenylation domain of nanA (A1) loads anthranilate onto the T1 domain, while A2 loads kynurenine, generated through spontaneous nonenzymatic deformylation of the nanC-supplied N-formyl-kynurenine. The peptide bond formation between the tethered amino acids is catalyzed by the first condensation domain (C1) between anthranilate's carbonyl carbon and kynurenine's aliphatic primary amine. The second C domain (C2) catalyzes the final cyclization event between the aromatic amine of kynurenine and the tethered carbonyl carbon, yielding nanangelenin B. The terminal T3 domain enhances the catalytic efficiency of C2, suggesting the T2-tethered Ant-L-Kyn is transferred to T3 prior to cyclization by C2. Once released from nanA, nanangelenin B is then prenylated by the prenyltransferase nanD to form nanangelenin C. Nanangelenin C is then N-hydroxylated by the FAD-dependent monooxygenase nanF and further acetylated by the acetyltransferase nanB to yield nanangelenin F. Finally, the N-methyltransferase nanE methylates the amide nitrogen of 1-benzazepine to convert nanangelenin F into nanangelenin A. NanE is also able to methylate most of the intermediates of the pathway such as nanangelenin B and nanangelenin C to produce nanangelenin D and nanangelenin E, respectively. The protein is Indoleamine 2,3-dioxygenase nanC of Aspergillus nanangensis.